Reading from the N-terminus, the 398-residue chain is Carbamoyl phosphate synthase small chain (398 aa).

Residues 1–204 (MSPLLPSFPP…PAYGTLDTGK (204 aa)) form a CPSase region. Positions 53, 256, and 258 each coordinate L-glutamine. The Glutamine amidotransferase type-1 domain maps to 208 to 395 (KVVAYDFGVK…VELMNAASKK (188 aa)). The active-site Nucleophile is the C284. L-glutamine-binding residues include L285, Q288, N326, G328, and F329. Active-site residues include H368 and E370.

Belongs to the CarA family. As to quaternary structure, composed of two chains; the small (or glutamine) chain promotes the hydrolysis of glutamine to ammonia, which is used by the large (or ammonia) chain to synthesize carbamoyl phosphate. Tetramer of heterodimers (alpha,beta)4.

It catalyses the reaction hydrogencarbonate + L-glutamine + 2 ATP + H2O = carbamoyl phosphate + L-glutamate + 2 ADP + phosphate + 2 H(+). It carries out the reaction L-glutamine + H2O = L-glutamate + NH4(+). It functions in the pathway amino-acid biosynthesis; L-arginine biosynthesis; carbamoyl phosphate from bicarbonate: step 1/1. Its pathway is pyrimidine metabolism; UMP biosynthesis via de novo pathway; (S)-dihydroorotate from bicarbonate: step 1/3. Functionally, small subunit of the glutamine-dependent carbamoyl phosphate synthetase (CPSase). CPSase catalyzes the formation of carbamoyl phosphate from the ammonia moiety of glutamine, carbonate, and phosphate donated by ATP, constituting the first step of 2 biosynthetic pathways, one leading to arginine and/or urea and the other to pyrimidine nucleotides. The small subunit (glutamine amidotransferase) binds and cleaves glutamine to supply the large subunit with the substrate ammonia. This chain is Carbamoyl phosphate synthase small chain, found in Polynucleobacter necessarius subsp. necessarius (strain STIR1).